A 465-amino-acid chain; its full sequence is Methylenetetrahydrofolate--tRNA-(uracil-5-)-methyltransferase TrmFO (465 aa).

3–8 is an FAD binding site; that stretch reads GAGLAG.

The protein belongs to the MnmG family. TrmFO subfamily. Requires FAD as cofactor.

The protein localises to the cytoplasm. The enzyme catalyses uridine(54) in tRNA + (6R)-5,10-methylene-5,6,7,8-tetrahydrofolate + NADH + H(+) = 5-methyluridine(54) in tRNA + (6S)-5,6,7,8-tetrahydrofolate + NAD(+). It catalyses the reaction uridine(54) in tRNA + (6R)-5,10-methylene-5,6,7,8-tetrahydrofolate + NADPH + H(+) = 5-methyluridine(54) in tRNA + (6S)-5,6,7,8-tetrahydrofolate + NADP(+). Catalyzes the folate-dependent formation of 5-methyl-uridine at position 54 (M-5-U54) in all tRNAs. The protein is Methylenetetrahydrofolate--tRNA-(uracil-5-)-methyltransferase TrmFO of Bradyrhizobium sp. (strain ORS 278).